The following is a 204-amino-acid chain: Ribonuclease HII (204 aa).

In terms of domain architecture, RNase H type-2 spans 14 to 204 (QYICGVDEVG…SFKLSCLGEK (191 aa)). 3 residues coordinate a divalent metal cation: aspartate 20, glutamate 21, and aspartate 116.

It belongs to the RNase HII family. Mn(2+) serves as cofactor. Requires Mg(2+) as cofactor.

The protein localises to the cytoplasm. The enzyme catalyses Endonucleolytic cleavage to 5'-phosphomonoester.. Its function is as follows. Endonuclease that specifically degrades the RNA of RNA-DNA hybrids. This is Ribonuclease HII from Chloroherpeton thalassium (strain ATCC 35110 / GB-78).